We begin with the raw amino-acid sequence, 234 residues long: LexA repressor (234 aa).

The segment at residues 26–46 is a DNA-binding region (H-T-H motif); that stretch reads FDEMKDALDLRSKSGIHRLIT. The segment at 80 to 107 is disordered; the sequence is RGFTPSVIEGNLGKVRPPSPQHAEDDSD. Catalysis depends on for autocatalytic cleavage activity residues S155 and K193.

Belongs to the peptidase S24 family. In terms of assembly, homodimer.

The catalysed reaction is Hydrolysis of Ala-|-Gly bond in repressor LexA.. Functionally, represses a number of genes involved in the response to DNA damage (SOS response), including recA and lexA. In the presence of single-stranded DNA, RecA interacts with LexA causing an autocatalytic cleavage which disrupts the DNA-binding part of LexA, leading to derepression of the SOS regulon and eventually DNA repair. The sequence is that of LexA repressor from Rhodopseudomonas palustris (strain HaA2).